A 993-amino-acid polypeptide reads, in one-letter code: Structural polyprotein (993 aa).

Asp11 contacts a divalent metal cation. A Peptidase S50 domain is found at 494-736; it reads ADKGYEVVAN…AGRQYHLAMA (243 aa). The Nucleophile role is filled by Ser633. The active site involves Lys673. Residues 950–993 are disordered; the sequence is AMEMKHRNPRRALPKPKPKPNAPTQRPPGRLGRWIRTVSDEDLE. The span at 956–967 shows a compositional bias: basic residues; the sequence is RNPRRALPKPKP. Positions 984-993 are interaction with VP1 protein; sequence IRTVSDEDLE.

Homotrimer. A central divalent metal stabilizes the VP2 trimer. Interacts with host ITGA4/ITGB1. As to quaternary structure, homodimer. Interacts (via C-terminus) with VP1 in the cytoplasm. Interacts with VP2. In terms of processing, specific enzymatic cleavages yield mature proteins. The capsid assembly seems to be regulated by polyprotein processing. The protease VP4 cleaves itself off the polyprotein, thus releasing pre-VP2 and VP3 within the infected cell. During capsid assembly, the C-terminus of pre-VP2 is further processed by VP4, giving rise to VP2, the external capsid protein and three small peptides that all stay closely associated with the capsid.

The protein localises to the virion. The protein resides in the host cytoplasm. In terms of biological role, capsid protein VP2 self assembles to form an icosahedral capsid with a T=13 symmetry, about 70 nm in diameter, and consisting of 260 VP2 trimers. The capsid encapsulates the genomic dsRNA. VP2 is also involved in attachment and entry into the host cell by interacting with host ITGA4/ITGB1. The precursor of VP2 plays an important role in capsid assembly. First, pre-VP2 and VP2 oligomers assemble to form a procapsid. Then, the pre-VP2 intermediates may be processed into VP2 proteins by proteolytic cleavage mediated by VP4 to obtain the mature virion. The final capsid is composed of pentamers and hexamers but VP2 has a natural tendency to assemble into all-pentameric structures. Therefore pre-VP2 may be required to allow formation of the hexameric structures. Its function is as follows. Protease VP4 is a serine protease that cleaves the polyprotein into its final products. Pre-VP2 is first partially cleaved, and may be completely processed by VP4 upon capsid maturation. Functionally, capsid protein VP3 plays a key role in virion assembly by providing a scaffold for the capsid made of VP2. May self-assemble to form a T=4-like icosahedral inner-capsid composed of at least 180 trimers. Plays a role in genomic RNA packaging by recruiting VP1 into the capsid and interacting with the dsRNA genome segments to form a ribonucleoprotein complex. Additionally, the interaction of the VP3 C-terminal tail with VP1 removes the inherent structural blockade of the polymerase active site. Thus, VP3 can also function as a transcriptional activator. In terms of biological role, structural peptide 1 is a small peptide derived from pre-VP2 C-terminus. It destabilizes and perforates cell membranes, suggesting a role during entry. Structural peptide 2 is a small peptide derived from pVP2 C-terminus. It is not essential for the virus viability, but viral growth is affected when missing. Its function is as follows. Structural peptide 3 is a small peptide derived from pVP2 C-terminus. It is not essential for the virus viability, but viral growth is affected when missing. Functionally, structural peptide 4 is a small peptide derived from pVP2 C-terminus. It is essential for the virus viability. The chain is Structural polyprotein from Avian infectious bursal disease virus (strain PBG-98) (IBDV).